We begin with the raw amino-acid sequence, 316 residues long: WEB family protein At3g13190 (316 aa).

3 coiled-coil regions span residues 42-90 (WNKE…MIND), 119-195 (EEES…AEEH), and 233-266 (RDET…MAQE). Residues 295 to 316 (STKEVLKSKPRSSSKEGCLVKC) are disordered.

The protein belongs to the WEB family.

This Arabidopsis thaliana (Mouse-ear cress) protein is WEB family protein At3g13190.